Reading from the N-terminus, the 188-residue chain is Putative CC-type chemokine FPV060 (188 aa).

The protein belongs to the intercrine beta (chemokine CC) family. Highly divergent.

The chain is Putative CC-type chemokine FPV060 from Fowlpox virus (strain NVSL) (FPV).